Reading from the N-terminus, the 146-residue chain is Large ribosomal subunit protein uL13 (146 aa).

Residues 126 to 146 are disordered; that stretch reads AGPKHPHAAQQPKVYEPRPRG.

It belongs to the universal ribosomal protein uL13 family. In terms of assembly, part of the 50S ribosomal subunit.

This protein is one of the early assembly proteins of the 50S ribosomal subunit, although it is not seen to bind rRNA by itself. It is important during the early stages of 50S assembly. In Roseiflexus castenholzii (strain DSM 13941 / HLO8), this protein is Large ribosomal subunit protein uL13.